The chain runs to 316 residues: Heme oxygenase 2 (316 aa).

A compositionally biased stretch (acidic residues) spans Met-1–Asp-12. A disordered region spans residues Met-1 to Arg-29. An N-acetylserine modification is found at Ser-2. Ser-2 is modified (phosphoserine). Basic and acidic residues predominate over residues Glu-13–Gln-27. Position 45 (His-45) interacts with heme b. HRM repeat units lie at residues Lys-264–Ala-269 and Ser-281–Thr-286. An S-nitrosocysteine mark is found at Cys-265 and Cys-282.

It belongs to the heme oxygenase family. In terms of processing, S-nitrosylated by BLVRB.

It localises to the microsome. The protein resides in the endoplasmic reticulum. The catalysed reaction is heme b + 3 reduced [NADPH--hemoprotein reductase] + 3 O2 = biliverdin IXalpha + CO + Fe(2+) + 3 oxidized [NADPH--hemoprotein reductase] + 3 H2O + H(+). In terms of biological role, heme oxygenase cleaves the heme ring at the alpha methene bridge to form biliverdin. Biliverdin is subsequently converted to bilirubin by biliverdin reductase. Under physiological conditions, the activity of heme oxygenase is highest in the spleen, where senescent erythrocytes are sequestrated and destroyed. Heme oxygenase 2 could be implicated in the production of carbon monoxide in brain where it could act as a neurotransmitter. The sequence is that of Heme oxygenase 2 (HMOX2) from Macaca fascicularis (Crab-eating macaque).